The following is a 169-amino-acid chain: Peptide deformylase (169 aa).

Residues Cys-93 and His-135 each contribute to the Fe cation site. The active site involves Glu-136. His-139 contributes to the Fe cation binding site.

It belongs to the polypeptide deformylase family. It depends on Fe(2+) as a cofactor.

The catalysed reaction is N-terminal N-formyl-L-methionyl-[peptide] + H2O = N-terminal L-methionyl-[peptide] + formate. Its function is as follows. Removes the formyl group from the N-terminal Met of newly synthesized proteins. Requires at least a dipeptide for an efficient rate of reaction. N-terminal L-methionine is a prerequisite for activity but the enzyme has broad specificity at other positions. This is Peptide deformylase from Aquifex aeolicus (strain VF5).